A 210-amino-acid polypeptide reads, in one-letter code: Na(+)-translocating NADH-quinone reductase subunit D (210 aa).

Helical transmembrane passes span 42–62 (FVMTLAVTAVTAFSNLFISLI), 72–92 (IIAQMAVIASLVIVVDQVLKA), 103–123 (VFVGLIITNCIVMGRAEAYAM), 131–151 (FLDGIGNGLGYGAVLLTVATV), and 178–198 (NGLLLLPPSAFFIIGLIIWGV).

Belongs to the NqrDE/RnfAE family. As to quaternary structure, composed of six subunits; NqrA, NqrB, NqrC, NqrD, NqrE and NqrF.

The protein resides in the cell inner membrane. It catalyses the reaction a ubiquinone + n Na(+)(in) + NADH + H(+) = a ubiquinol + n Na(+)(out) + NAD(+). In terms of biological role, NQR complex catalyzes the reduction of ubiquinone-1 to ubiquinol by two successive reactions, coupled with the transport of Na(+) ions from the cytoplasm to the periplasm. NqrA to NqrE are probably involved in the second step, the conversion of ubisemiquinone to ubiquinol. The protein is Na(+)-translocating NADH-quinone reductase subunit D of Aeromonas hydrophila subsp. hydrophila (strain ATCC 7966 / DSM 30187 / BCRC 13018 / CCUG 14551 / JCM 1027 / KCTC 2358 / NCIMB 9240 / NCTC 8049).